Consider the following 404-residue polypeptide: Cysteine desulfurase IscS (404 aa).

Pyridoxal 5'-phosphate contacts are provided by residues 75–76, asparagine 155, glutamine 183, and 203–205; these read AT and SGH. The residue at position 206 (lysine 206) is an N6-(pyridoxal phosphate)lysine. Threonine 243 contacts pyridoxal 5'-phosphate. Cysteine 328 (cysteine persulfide intermediate) is an active-site residue. Cysteine 328 serves as a coordination point for [2Fe-2S] cluster.

The protein belongs to the class-V pyridoxal-phosphate-dependent aminotransferase family. NifS/IscS subfamily. As to quaternary structure, homodimer. Forms a heterotetramer with IscU, interacts with other sulfur acceptors. It depends on pyridoxal 5'-phosphate as a cofactor.

Its subcellular location is the cytoplasm. The enzyme catalyses (sulfur carrier)-H + L-cysteine = (sulfur carrier)-SH + L-alanine. Its pathway is cofactor biosynthesis; iron-sulfur cluster biosynthesis. In terms of biological role, master enzyme that delivers sulfur to a number of partners involved in Fe-S cluster assembly, tRNA modification or cofactor biosynthesis. Catalyzes the removal of elemental sulfur atoms from cysteine to produce alanine. Functions as a sulfur delivery protein for Fe-S cluster synthesis onto IscU, an Fe-S scaffold assembly protein, as well as other S acceptor proteins. The sequence is that of Cysteine desulfurase IscS from Pectobacterium atrosepticum (strain SCRI 1043 / ATCC BAA-672) (Erwinia carotovora subsp. atroseptica).